The primary structure comprises 404 residues: Putative transporter AmpG 2 (404 aa).

A run of 12 helical transmembrane segments spans residues 11-31 (IYNI…YLLT), 49-69 (IGLF…GPLL), 84-104 (YCLI…TGFN), 109-129 (FISF…YDML), 154-174 (FRIG…IISW), 177-197 (VYRT…FYPL), 224-244 (WLII…LAVM), 261-281 (LGYK…GGFL), 294-311 (VLVY…LYSY), 315-337 (ITTL…SPFF), 353-373 (IALI…ISGY), and 378-398 (LGWG…YILI).

It belongs to the major facilitator superfamily.

The protein resides in the cell inner membrane. The chain is Putative transporter AmpG 2 (ampG2) from Rickettsia bellii (strain RML369-C).